The chain runs to 238 residues: Ribonuclease PH (238 aa).

Residues R86 and 124–126 (GTR) each bind phosphate.

It belongs to the RNase PH family. In terms of assembly, homohexameric ring arranged as a trimer of dimers.

The enzyme catalyses tRNA(n+1) + phosphate = tRNA(n) + a ribonucleoside 5'-diphosphate. In terms of biological role, phosphorolytic 3'-5' exoribonuclease that plays an important role in tRNA 3'-end maturation. Removes nucleotide residues following the 3'-CCA terminus of tRNAs; can also add nucleotides to the ends of RNA molecules by using nucleoside diphosphates as substrates, but this may not be physiologically important. Probably plays a role in initiation of 16S rRNA degradation (leading to ribosome degradation) during starvation. The sequence is that of Ribonuclease PH from Shigella boydii serotype 18 (strain CDC 3083-94 / BS512).